Consider the following 155-residue polypeptide: Ubiquitin-conjugating enzyme E2 14 (155 aa).

The UBC core domain maps to 7 to 154; sequence SSSRRLTKEY…ARDYVEQFAK (148 aa). Residue Cys-91 is the Glycyl thioester intermediate of the active site.

This sequence belongs to the ubiquitin-conjugating enzyme family.

It catalyses the reaction S-ubiquitinyl-[E1 ubiquitin-activating enzyme]-L-cysteine + [E2 ubiquitin-conjugating enzyme]-L-cysteine = [E1 ubiquitin-activating enzyme]-L-cysteine + S-ubiquitinyl-[E2 ubiquitin-conjugating enzyme]-L-cysteine.. It participates in protein modification; protein ubiquitination. Functionally, catalyzes the covalent attachment of ubiquitin to other proteins. Mediates the selective degradation of short-lived and abnormal proteins. This chain is Ubiquitin-conjugating enzyme E2 14 (ubc14), found in Schizosaccharomyces pombe (strain 972 / ATCC 24843) (Fission yeast).